Consider the following 285-residue polypeptide: (3S)-malyl-CoA thioesterase (285 aa).

Positions 70 and 122 each coordinate substrate. Mg(2+) is bound by residues Glu-122 and Asp-148.

Belongs to the HpcH/HpaI aldolase family. Homodimer or homotrimer. The cofactor is Mg(2+).

It catalyses the reaction (S)-malyl-CoA + H2O = (S)-malate + CoA + H(+). Reversibly inhibited by EDTA. Stimulated by the divalent cations Mg(2+) and Mn(2+). Its function is as follows. Catalyzes the hydrolysis of (3S)-malyl-CoA to (3S)-malate and free CoA. Inactive towards beta-methylmalyl-CoA and other CoA esters. This is (3S)-malyl-CoA thioesterase from Cereibacter sphaeroides (strain ATCC 17023 / DSM 158 / JCM 6121 / CCUG 31486 / LMG 2827 / NBRC 12203 / NCIMB 8253 / ATH 2.4.1.) (Rhodobacter sphaeroides).